The primary structure comprises 555 residues: 2-succinyl-5-enolpyruvyl-6-hydroxy-3-cyclohexene-1-carboxylate synthase (555 aa).

This sequence belongs to the TPP enzyme family. MenD subfamily. As to quaternary structure, homodimer. It depends on Mg(2+) as a cofactor. Mn(2+) is required as a cofactor. Requires thiamine diphosphate as cofactor.

The catalysed reaction is isochorismate + 2-oxoglutarate + H(+) = 5-enolpyruvoyl-6-hydroxy-2-succinyl-cyclohex-3-ene-1-carboxylate + CO2. It functions in the pathway quinol/quinone metabolism; 1,4-dihydroxy-2-naphthoate biosynthesis; 1,4-dihydroxy-2-naphthoate from chorismate: step 2/7. It participates in quinol/quinone metabolism; menaquinone biosynthesis. Catalyzes the thiamine diphosphate-dependent decarboxylation of 2-oxoglutarate and the subsequent addition of the resulting succinic semialdehyde-thiamine pyrophosphate anion to isochorismate to yield 2-succinyl-5-enolpyruvyl-6-hydroxy-3-cyclohexene-1-carboxylate (SEPHCHC). The protein is 2-succinyl-5-enolpyruvyl-6-hydroxy-3-cyclohexene-1-carboxylate synthase of Cronobacter sakazakii (strain ATCC BAA-894) (Enterobacter sakazakii).